The following is a 584-amino-acid chain: UBX domain-containing protein 2 (584 aa).

Residues 1-80 (MPVVNHEDSE…PTQTSTPMAE (80 aa)) are Cytoplasmic-facing. A helical transmembrane segment spans residues 81–101 (TLVPPALGPRPLLFTASLPVV). The Lumenal portion of the chain corresponds to 102 to 151 (RPLPANFRNDFRTIGLNGRSNTVWSMFESFSYDGNPFLFILLLIPRIINR). A helical transmembrane segment spans residues 152–172 (LSATIFTFFCTLLSLHSISGG). Residues 173–584 (GNSGKPKISK…DEEDEENEEQ (412 aa)) lie on the Cytoplasmic side of the membrane. The 145-residue stretch at 426-570 (ETTGKQATLQ…WPNGSLLVEA (145 aa)) folds into the UBX domain.

In terms of assembly, component of the DOA10 ubiquitin ligase complex which contains E3 ligase SSM4/DOA10 and CDC48-binding protein UBX2/SEL1. Component of the HRD1 ubiquitin ligase complex which contains the E3 ligase HRD1, its cofactors HRD3, USA1 and DER1, substrate recruiting factor YOS9 and UBX2. In ERAD-L, HRD3 and YOS9 jointly bind misfolded glycoproteins in the endoplasmic reticulum (ER) lumen. Movement of ERAD-L substrates through the ER membrane is facilitated by HRD1 and DER1 which have lateral gates facing each other and which distort the membrane region between the lateral gates, making it much thinner than a normal phospholipid bilayer. Substrates insert into the membrane as a hairpin loop with one strand interacting with DER1 and the other with HRD1. Both the DOA10 and HRD1 ubiquitin ligase complexes interact with the heterotrimeric CDC48-NPL4-UFD1 ATPase complex which is recruited by UBX2 via its interaction with CDC48 and which moves ubiquitinated substrates to the cytosol for targeting to the proteasome.

It is found in the endoplasmic reticulum membrane. Functionally, integral endoplasmic reticulum membrane protein that coordinates the assembly of the ER-associated protein degradation (ERAD) machinery at the ER membrane. Mediates binding of CDC48 to the E3 ubiquitin ligases SSM4/DOA10 and HRD1, and to ERAD substrates. Component of the DOA10 ubiquitin ligase complex, which is part of the ERAD-C pathway responsible for the rapid degradation of membrane proteins with misfolded cytoplasmic domains. ERAD-C substrates are ubiquitinated through DOA10 in conjunction with the E2 ubiquitin-conjugating enzymes UBC6 and UBC7-CUE1. Also a component of the HRD1 ubiquitin ligase complex, which is part of the ERAD-L and ERAD-M pathways responsible for the rapid degradation of soluble lumenal and membrane proteins with misfolded lumenal domains (ERAD-L), or ER-membrane proteins with misfolded transmembrane domains (ERAD-M). ERAD-L substrates are ubiquitinated through HRD1 in conjunction with the E2 ubiquitin-conjugating enzymes UBC1 and UBC7-CUE1. Ubiquitinated substrates are then removed to the cytosol via the action of the CDC48-NPL4-UFD1 ATPase complex and targeted to the proteasome. The polypeptide is UBX domain-containing protein 2 (UBX2) (Saccharomyces cerevisiae (strain ATCC 204508 / S288c) (Baker's yeast)).